The sequence spans 121 residues: Cell division protein FtsB (121 aa).

Residues 1–6 (MRNWRW) are Cytoplasmic-facing. Residues 7–24 (LLLVLAVLLAWLQYRFWF) form a helical membrane-spanning segment. Over 25-121 (GPGNSGEVMM…AASADPVDHP (97 aa)) the chain is Periplasmic. Residues 31–66 (EVMMLEAQVAHQTRDNEGLRQRNQALAAEVKDLKDG) adopt a coiled-coil conformation. A disordered region spans residues 98–121 (PPAAQEAAPPAQPPAASADPVDHP).

This sequence belongs to the FtsB family. As to quaternary structure, part of a complex composed of FtsB, FtsL and FtsQ.

The protein localises to the cell inner membrane. Its function is as follows. Essential cell division protein. May link together the upstream cell division proteins, which are predominantly cytoplasmic, with the downstream cell division proteins, which are predominantly periplasmic. This is Cell division protein FtsB from Xanthomonas campestris pv. campestris (strain 8004).